Consider the following 331-residue polypeptide: UPF0194 membrane protein YbhG (331 aa).

The N-terminal stretch at 1–19 is a signal peptide; the sequence is MKKPVVIGLAIAAIVAVIA. A coiled-coil region spans residues 107-208; that stretch reads EEIAQAAAAV…LDLQDTTLIA (102 aa).

It belongs to the UPF0194 family.

The protein resides in the periplasm. The sequence is that of UPF0194 membrane protein YbhG from Salmonella paratyphi A (strain ATCC 9150 / SARB42).